The chain runs to 290 residues: Putative beta-lactamase HcpC (290 aa).

A signal peptide spans M1 to A25. TPR repeat units follow at residues P29–S62, C64–N98, C100–A133, E134–D170, C172–S205, P206–G242, and C244–G278. Cystine bridges form between C56/C64, C92/C100, C128/C136, C164/C172, C200/C208, C236/C244, and C272/C280.

Belongs to the hcp beta-lactamase family.

The protein localises to the secreted. It catalyses the reaction a beta-lactam + H2O = a substituted beta-amino acid. Functionally, may hydrolyze 6-aminopenicillinic acid and 7-aminocephalosporanic acid (ACA) derivatives. This is Putative beta-lactamase HcpC (hcpC) from Helicobacter pylori (strain ATCC 700392 / 26695) (Campylobacter pylori).